Consider the following 160-residue polypeptide: Endoplasmic reticulum transmembrane protein 2 (160 aa).

Residues methionine 1–glycine 2 are Lumenal-facing. Residues valine 3–valine 23 traverse the membrane as a helical segment. Residues leucine 24–lysine 45 lie on the Cytoplasmic side of the membrane. The helical transmembrane segment at lysine 46–tryptophan 66 threads the bilayer. The Lumenal portion of the chain corresponds to lysine 67–asparagine 103. The helical transmembrane segment at valine 104 to leucine 124 threads the bilayer. Residues arginine 125 to phenylalanine 160 are Cytoplasmic-facing. The Di-lysine motif motif lies at lysine 157–phenylalanine 160.

Belongs to the BCAP29/BCAP31 family.

It is found in the endoplasmic reticulum membrane. Its function is as follows. May play a role in anterograde transport of membrane proteins from the endoplasmic reticulum to the Golgi. The protein is Endoplasmic reticulum transmembrane protein 2 (YET2) of Saccharomyces cerevisiae (strain ATCC 204508 / S288c) (Baker's yeast).